We begin with the raw amino-acid sequence, 369 residues long: MLFPKRLIVWGVLLILSLSQFVLYLPATTCTNSKGLRLCAPQFTITVIGGSSTANEFIASVREFLRLISYLTIDMGWSNEFTDPSVYEDENLVDTFQPDKVFELNYFGFCKRSNKSKVYCTSNENYGMDVLEVLVRDVGIQLGNISTTRSNETKKFGDSLVLTYRLALTSIRDFLKHDKHTGNALSKALIGSPDPNVKGASPTKNYLKGVNLAFILMMFNGMVFYFAVLEIIVGFLSICVVSAFGGALSVGKRHRLFPILLKSSSSILVVIATLTILCNIVYLIALKTLEPEEVTDVGSDNAAVHTTGWELLKVNVGSGFIMGLARYAIQWVLLVLAFLAANHYKAKPKKSDKYTEDTSNSPSPDLMEK.

Residues 1 to 6 (MLFPKR) lie on the Cytoplasmic side of the membrane. A helical transmembrane segment spans residues 7–27 (LIVWGVLLILSLSQFVLYLPA). At 28–220 (TTCTNSKGLR…NLAFILMMFN (193 aa)) the chain is on the lumenal side. A helical transmembrane segment spans residues 221 to 241 (GMVFYFAVLEIIVGFLSICVV). The Cytoplasmic segment spans residues 242–265 (SAFGGALSVGKRHRLFPILLKSSS). Residues 266 to 286 (SILVVIATLTILCNIVYLIAL) form a helical membrane-spanning segment. Residues 287–319 (KTLEPEEVTDVGSDNAAVHTTGWELLKVNVGSG) are Lumenal-facing. The helical transmembrane segment at 320–340 (FIMGLARYAIQWVLLVLAFLA) threads the bilayer. The Cytoplasmic segment spans residues 341–369 (ANHYKAKPKKSDKYTEDTSNSPSPDLMEK). Residues 348-369 (PKKSDKYTEDTSNSPSPDLMEK) form a disordered region.

It belongs to the SMA2 family.

The protein localises to the prospore membrane. It is found in the endoplasmic reticulum. Functionally, involved in spore and ascus formation. Required for the efficient assembly of the precursors of the prospore membrane to a continuous prospore membrane. The protein is Spore membrane assembly protein 2 (SMA2) of Saccharomyces cerevisiae (strain YJM789) (Baker's yeast).